The chain runs to 340 residues: Mitochondrial glycine transporter (340 aa).

3 Solcar repeats span residues 23-108 (PKTL…ARNG), 128-218 (LSPF…FKND), and 237-325 (RSTI…LIKS). 6 helical membrane passes run 29–54 (LISGASAGLISAISLQPFDLLKTRLQ), 83–109 (GALPSTLRTSVGAGLYFTILSSARNGI), 134–159 (LATGFIVRAVVGIITMPITIVKTRYE), 193–216 (GSFATLARDCPYAGMYVLFYELFK), 241–267 (INTSAAILAASVSTTITAPFDAIKTRL), and 300–318 (GLSLRFGRKGLSSGISWCI).

Belongs to the mitochondrial carrier (TC 2.A.29) family. SLC25A38 subfamily.

It is found in the mitochondrion inner membrane. The catalysed reaction is glycine(in) = glycine(out). Its function is as follows. Mitochondrial glycine transporter that imports glycine into the mitochondrial matrix. Plays an important role in providing glycine for the first enzymatic step in heme biosynthesis, the condensation of glycine with succinyl-CoA to produce 5-aminolevulinate (ALA) in the mitochondrial matrix. In Debaryomyces hansenii (strain ATCC 36239 / CBS 767 / BCRC 21394 / JCM 1990 / NBRC 0083 / IGC 2968) (Yeast), this protein is Mitochondrial glycine transporter.